The chain runs to 306 residues: Non-specific ribonucleoside hydrolase RihC (306 aa).

The active site involves His-235.

It belongs to the IUNH family. RihC subfamily.

Functionally, hydrolyzes both purine and pyrimidine ribonucleosides with a broad-substrate specificity. The sequence is that of Non-specific ribonucleoside hydrolase RihC from Salmonella dublin (strain CT_02021853).